Reading from the N-terminus, the 241-residue chain is Probable transcriptional regulatory protein FMG_0893 (241 aa).

Belongs to the TACO1 family.

It localises to the cytoplasm. This Finegoldia magna (strain ATCC 29328 / DSM 20472 / WAL 2508) (Peptostreptococcus magnus) protein is Probable transcriptional regulatory protein FMG_0893.